Here is a 132-residue protein sequence, read N- to C-terminus: Arsenate reductase 1 (132 aa).

Active-site nucleophile residues include Cys-10, Cys-82, and Cys-89. Cystine bridges form between Cys-10-Cys-82 and Cys-82-Cys-89.

Belongs to the low molecular weight phosphotyrosine protein phosphatase family. Thioredoxin-coupled ArsC subfamily.

Its subcellular location is the cytoplasm. It catalyses the reaction arsenate + [thioredoxin]-dithiol + H(+) = arsenite + [thioredoxin]-disulfide + H2O. Functionally, catalyzes the reduction of arsenate [As(V)] to arsenite [As(III)]. The chain is Arsenate reductase 1 from Staphylococcus epidermidis (strain ATCC 35984 / DSM 28319 / BCRC 17069 / CCUG 31568 / BM 3577 / RP62A).